Here is a 900-residue protein sequence, read N- to C-terminus: UPF0182 protein Ppro_3567 (900 aa).

7 helical membrane-spanning segments follow: residues 15–35 (FFPLLILVSVLLSLISYLLNL), 60–80 (GAGLLFGGLLFLFVQINLHVA), 112–132 (VSMLVSFVLALLAGNLGAMKW), 174–194 (FIILAAAALATAVYYVRGGIL), 210–230 (LAVLVGIFACAVAAGFYLDSF), 257–277 (VLTFLTPLAGAMLAIGIWKGV), and 282–302 (LLAPAIVVALYMLGIRVYPGV).

This sequence belongs to the UPF0182 family.

The protein resides in the cell membrane. This Pelobacter propionicus (strain DSM 2379 / NBRC 103807 / OttBd1) protein is UPF0182 protein Ppro_3567.